The chain runs to 286 residues: 4-hydroxybenzoate octaprenyltransferase (286 aa).

A run of 7 helical transmembrane segments spans residues Gly-21–Met-40, Leu-96–Val-116, Phe-142–Val-162, Trp-167–Val-187, Gln-210–Ala-230, Leu-235–Phe-255, and Phe-266–Phe-286.

Belongs to the UbiA prenyltransferase family. The cofactor is Mg(2+).

The protein resides in the cell inner membrane. It carries out the reaction all-trans-octaprenyl diphosphate + 4-hydroxybenzoate = 4-hydroxy-3-(all-trans-octaprenyl)benzoate + diphosphate. It functions in the pathway cofactor biosynthesis; ubiquinone biosynthesis. Catalyzes the prenylation of para-hydroxybenzoate (PHB) with an all-trans polyprenyl group. Mediates the second step in the final reaction sequence of ubiquinone-8 (UQ-8) biosynthesis, which is the condensation of the polyisoprenoid side chain with PHB, generating the first membrane-bound Q intermediate 3-octaprenyl-4-hydroxybenzoate. The polypeptide is 4-hydroxybenzoate octaprenyltransferase (Shewanella sp. (strain MR-4)).